A 402-amino-acid polypeptide reads, in one-letter code: Putative F-box protein At1g70970 (402 aa).

Residues 4–52 (SSSETLHVEDLQTEIMSWLPLKSLLRFVIVSKKWASIIRGEQFKALYLR) enclose the F-box domain.

This is Putative F-box protein At1g70970 from Arabidopsis thaliana (Mouse-ear cress).